Reading from the N-terminus, the 278-residue chain is 4-deoxy-L-threo-5-hexosulose-uronate ketol-isomerase (278 aa).

4 residues coordinate Zn(2+): His196, His198, Glu203, and His245.

Belongs to the KduI family. As to quaternary structure, homohexamer. It depends on Zn(2+) as a cofactor.

It carries out the reaction 5-dehydro-4-deoxy-D-glucuronate = 3-deoxy-D-glycero-2,5-hexodiulosonate. Its pathway is glycan metabolism; pectin degradation; 2-dehydro-3-deoxy-D-gluconate from pectin: step 4/5. Functionally, catalyzes the isomerization of 5-dehydro-4-deoxy-D-glucuronate to 3-deoxy-D-glycero-2,5-hexodiulosonate. This Escherichia coli (strain K12 / MC4100 / BW2952) protein is 4-deoxy-L-threo-5-hexosulose-uronate ketol-isomerase.